The primary structure comprises 151 residues: Nascent polypeptide-associated complex subunit beta (151 aa).

Residues 32 to 97 (EQDDTKLMEA…PQEKDVTQLI (66 aa)) enclose the NAC-A/B domain. Residues 122 to 151 (GKTPSMGGENAGADEDIPDLIEGQKFDEVE) are disordered.

This sequence belongs to the NAC-beta family. As to quaternary structure, part of the nascent polypeptide-associated complex (NAC), consisting of EGD2 and EGD1. NAC associates with ribosomes via EGD1.

Its subcellular location is the cytoplasm. It localises to the nucleus. In terms of biological role, component of the nascent polypeptide-associated complex (NAC), a dynamic component of the ribosomal exit tunnel, protecting the emerging polypeptides from interaction with other cytoplasmic proteins to ensure appropriate nascent protein targeting. The NAC complex also promotes mitochondrial protein import by enhancing productive ribosome interactions with the outer mitochondrial membrane and blocks the inappropriate interaction of ribosomes translating non-secretory nascent polypeptides with translocation sites in the membrane of the endoplasmic reticulum. EGD1 may act as a transcription factor that exert a negative effect on the expression of several genes that are transcribed by RNA polymerase II. The chain is Nascent polypeptide-associated complex subunit beta (EGD1) from Meyerozyma guilliermondii (strain ATCC 6260 / CBS 566 / DSM 6381 / JCM 1539 / NBRC 10279 / NRRL Y-324) (Yeast).